Consider the following 106-residue polypeptide: Thioredoxin (106 aa).

A Thioredoxin domain is found at 1–106 (GATVKVTNAT…RLAAFLDASL (106 aa)). Cys31 and Cys34 are oxidised to a cystine.

Belongs to the thioredoxin family.

Its function is as follows. Participates in various redox reactions through the reversible oxidation of its active center dithiol to a disulfide and catalyzes dithiol-disulfide exchange reactions. The chain is Thioredoxin (trxA) from Kitasatospora aureofaciens (Streptomyces aureofaciens).